Reading from the N-terminus, the 480-residue chain is Glycogen synthase (480 aa).

Residue Lys-15 coordinates ADP-alpha-D-glucose.

This sequence belongs to the glycosyltransferase 1 family. Bacterial/plant glycogen synthase subfamily.

The enzyme catalyses [(1-&gt;4)-alpha-D-glucosyl](n) + ADP-alpha-D-glucose = [(1-&gt;4)-alpha-D-glucosyl](n+1) + ADP + H(+). Its pathway is glycan biosynthesis; glycogen biosynthesis. Its function is as follows. Synthesizes alpha-1,4-glucan chains using ADP-glucose. The polypeptide is Glycogen synthase (Pasteurella multocida (strain Pm70)).